A 78-amino-acid polypeptide reads, in one-letter code: MIKEKILSIVAFCYGIAYSKLSEETKFIEDLSADSLSLIEMLDMISFEFNLRIDESALEHIITIGDLISVVKNSTKSI.

Residues 1–75 form the Carrier domain; that stretch reads MIKEKILSIV…DLISVVKNST (75 aa). Serine 35 carries the post-translational modification O-(pantetheine 4'-phosphoryl)serine.

It belongs to the acyl carrier protein (ACP) family. 4'-phosphopantetheine is transferred from CoA to a specific serine of apo-ACP by AcpS. This modification is essential for activity because fatty acids are bound in thioester linkage to the sulfhydryl of the prosthetic group.

It is found in the cytoplasm. It functions in the pathway lipid metabolism; fatty acid biosynthesis. In terms of biological role, carrier of the growing fatty acid chain in fatty acid biosynthesis. This is Acyl carrier protein (acpP) from Shigella flexneri.